The primary structure comprises 117 residues: Hainantoxin-XV-3 (117 aa).

The N-terminal stretch at M1 to S20 is a signal peptide. Positions S20–E55 are disordered. Residues S21–R56 constitute a propeptide that is removed on maturation. Residues N23 to E55 show a composition bias toward basic and acidic residues. Intrachain disulfides connect C58–C72, C65–C78, C69–C115, and C71–C91.

Belongs to the neurotoxin 03 (Tx2) family. 02 subfamily. HNTX-XV sub-subfamily. As to expression, expressed by the venom gland.

Its subcellular location is the secreted. Its function is as follows. Putative ion channel inhibitor. This Cyriopagopus hainanus (Chinese bird spider) protein is Hainantoxin-XV-3.